Reading from the N-terminus, the 403-residue chain is Phosphoglycerate kinase (403 aa).

Residues 21–23 (DFN), Arg-36, 59–62 (HLGR), Arg-119, and Arg-154 contribute to the substrate site. ATP-binding positions include Lys-207, Gly-299, Glu-330, and 357–360 (GGDA).

The protein belongs to the phosphoglycerate kinase family. In terms of assembly, monomer.

It localises to the cytoplasm. The enzyme catalyses (2R)-3-phosphoglycerate + ATP = (2R)-3-phospho-glyceroyl phosphate + ADP. It participates in carbohydrate degradation; glycolysis; pyruvate from D-glyceraldehyde 3-phosphate: step 2/5. The chain is Phosphoglycerate kinase from Chlamydia abortus (strain DSM 27085 / S26/3) (Chlamydophila abortus).